Consider the following 175-residue polypeptide: Calcineurin subunit B (175 aa).

4 EF-hand domains span residues 21-56 (PELM…ANNP), 60-88 (RMIA…FSSK), 90-125 (GRDE…MVGN), and 131-166 (QLQQ…TDIV). D34, D36, S38, S40, E45, D66, D68, S70, T72, E77, D103, D105, D107, Y109, E114, D144, D146, D148, K150, and E155 together coordinate Ca(2+).

Belongs to the calcineurin regulatory subunit family. In terms of assembly, composed of a catalytic subunit (A) and a regulatory subunit (B).

In terms of biological role, regulatory subunit of calcineurin, a calcium-dependent, calmodulin stimulated protein phosphatase. Confers calcium sensitivity. Plays a central role in virulence and antifungal drug action. This Cryptococcus neoformans var. neoformans serotype D (strain B-3501A) (Filobasidiella neoformans) protein is Calcineurin subunit B (CNB1).